A 449-amino-acid polypeptide reads, in one-letter code: MSTPSARTGGSLDAWFKISQRGSTVRQEVVAGLTTFLAMVYSVIVVPGMLGKAGFPPAAVFVATCLVAGLGSIVMGLWANLPLAIGCAISLTAFTAFSLVLGQHISVPVALGAVFLMGVLFTVISATGIRSWILRNLPHGVAHGTGIGIGLFLLLIAANGVGLVIKNPLDGLPVALGDFATFPVIMSLVGLAVIIGLEKLKVPGGILLTIIGISIVGLIFDPNVHFSGVFAMPSLSDENGNSLIGSLDIMGALNPVVLPSVLALVMTAVFDATGTIRAVAGQANLLDKDGQIIDGGKALTTDSMSSVFSGLVGAAPAAVYIESAAGTAAGGKTGLTAITVGVLFLLILFLSPLSYLVPGYATAPALMYVGLLMLSNVAKIDFADFVDAMAGLVTAVFIVLTCNIVTGIMIGFATLVIGRLVSGEWRKLNIGTVVIAVALVTFYAGGWAI.

Residues 1–25 (MSTPSARTGGSLDAWFKISQRGSTV) are Cytoplasmic-facing. The helical transmembrane segment at 26–49 (RQEVVAGLTTFLAMVYSVIVVPGM) threads the bilayer. Residues 50 to 59 (LGKAGFPPAA) are Periplasmic-facing. A helical transmembrane segment spans residues 60 to 78 (VFVATCLVAGLGSIVMGLW). The Cytoplasmic portion of the chain corresponds to 79–80 (AN). Residues 81 to 97 (LPLAIGCAISLTAFTAF) form a discontinuously helical membrane-spanning segment. Residues 98–109 (SLVLGQHISVPV) are Periplasmic-facing. A helical transmembrane segment spans residues 110 to 129 (ALGAVFLMGVLFTVISATGI). The Cytoplasmic portion of the chain corresponds to 130–141 (RSWILRNLPHGV). Residues 142–162 (AHGTGIGIGLFLLLIAANGVG) form a helical membrane-spanning segment. Over 163-180 (LVIKNPLDGLPVALGDFA) the chain is Periplasmic. A helical membrane pass occupies residues 181 to 198 (TFPVIMSLVGLAVIIGLE). Over 199–202 (KLKV) the chain is Cytoplasmic. The chain crosses the membrane as a helical span at residues 203–222 (PGGILLTIIGISIVGLIFDP). Residues 223 to 254 (NVHFSGVFAMPSLSDENGNSLIGSLDIMGALN) are Periplasmic-facing. A helical transmembrane segment spans residues 255-283 (PVVLPSVLALVMTAVFDATGTIRAVAGQA). The Cytoplasmic segment spans residues 284–296 (NLLDKDGQIIDGG). A helical membrane pass occupies residues 297 to 312 (KALTTDSMSSVFSGLV). Residues 313–314 (GA) lie on the Periplasmic side of the membrane. A discontinuously helical membrane pass occupies residues 315 to 330 (APAAVYIESAAGTAAG). Over 331–334 (GKTG) the chain is Cytoplasmic. The helical transmembrane segment at 335–349 (LTAITVGVLFLLILF) threads the bilayer. At 350 to 360 (LSPLSYLVPGY) the chain is on the periplasmic side. Residues 361–380 (ATAPALMYVGLLMLSNVAKI) traverse the membrane as a helical segment. Residues 381 to 385 (DFADF) lie on the Cytoplasmic side of the membrane. An intramembrane region (discontinuously helical) is located at residues 386 to 421 (VDAMAGLVTAVFIVLTCNIVTGIMIGFATLVIGRLV). Residues 422 to 449 (SGEWRKLNIGTVVIAVALVTFYAGGWAI) are Cytoplasmic-facing.

The protein belongs to the nucleobase:cation symporter-2 (NCS2) (TC 2.A.40) family. Azg-like subfamily.

The protein localises to the cell inner membrane. In terms of biological role, high-affinity transporter for guanine and hypoxanthine. The chain is Guanine/hypoxanthine permease GhxP (ghxP) from Escherichia coli O157:H7.